We begin with the raw amino-acid sequence, 51 residues long: Insulin (51 aa).

3 cysteine pairs are disulfide-bonded: cysteine 7/cysteine 37, cysteine 19/cysteine 50, and cysteine 36/cysteine 41.

Belongs to the insulin family. As to quaternary structure, heterodimer of a B chain and an A chain linked by two disulfide bonds.

The protein localises to the secreted. Insulin decreases blood glucose concentration. It increases cell permeability to monosaccharides, amino acids and fatty acids. It accelerates glycolysis, the pentose phosphate cycle, and glycogen synthesis in liver. This chain is Insulin (INS), found in Capra hircus (Goat).